Consider the following 396-residue polypeptide: Phosphopentomutase (396 aa).

Aspartate 14, aspartate 286, histidine 291, aspartate 327, histidine 328, and histidine 339 together coordinate Mn(2+).

Belongs to the phosphopentomutase family. Mn(2+) is required as a cofactor.

It localises to the cytoplasm. It carries out the reaction 2-deoxy-alpha-D-ribose 1-phosphate = 2-deoxy-D-ribose 5-phosphate. The catalysed reaction is alpha-D-ribose 1-phosphate = D-ribose 5-phosphate. The protein operates within carbohydrate degradation; 2-deoxy-D-ribose 1-phosphate degradation; D-glyceraldehyde 3-phosphate and acetaldehyde from 2-deoxy-alpha-D-ribose 1-phosphate: step 1/2. Functionally, isomerase that catalyzes the conversion of deoxy-ribose 1-phosphate (dRib-1-P) and ribose 1-phosphate (Rib-1-P) to deoxy-ribose 5-phosphate (dRib-5-P) and ribose 5-phosphate (Rib-5-P), respectively. The polypeptide is Phosphopentomutase (Staphylococcus carnosus (strain TM300)).